The primary structure comprises 359 residues: Putative ankyrin repeat protein R190 (359 aa).

ANK repeat units follow at residues 72-103 (RLME…DFRC), 105-133 (DCVI…DLNR), 142-173 (DEII…SISI), 203-234 (LGNL…DINN), 236-260 (HEYS…YGLI), 261-287 (IHDD…IGHK), and 288-317 (PSKQ…DLSD).

In Acanthamoeba polyphaga (Amoeba), this protein is Putative ankyrin repeat protein R190.